The sequence spans 530 residues: GMP synthase [glutamine-hydrolyzing] (530 aa).

The region spanning 4-205 (RILILDYGSQ…VREICGCEGD (202 aa)) is the Glutamine amidotransferase type-1 domain. Cysteine 84 (nucleophile) is an active-site residue. Residues histidine 179 and glutamate 181 contribute to the active site. The GMPS ATP-PPase domain maps to 206 to 398 (WNMPDYISEA…LGLPPQMVYR (193 aa)). ATP is bound at residue 233–239 (SGGVDSS).

As to quaternary structure, homodimer.

The catalysed reaction is XMP + L-glutamine + ATP + H2O = GMP + L-glutamate + AMP + diphosphate + 2 H(+). Its pathway is purine metabolism; GMP biosynthesis; GMP from XMP (L-Gln route): step 1/1. Catalyzes the synthesis of GMP from XMP. This is GMP synthase [glutamine-hydrolyzing] from Bordetella avium (strain 197N).